Reading from the N-terminus, the 209-residue chain is Leucyl/phenylalanyl-tRNA--protein transferase (209 aa).

The protein belongs to the L/F-transferase family.

Its subcellular location is the cytoplasm. It carries out the reaction N-terminal L-lysyl-[protein] + L-leucyl-tRNA(Leu) = N-terminal L-leucyl-L-lysyl-[protein] + tRNA(Leu) + H(+). The catalysed reaction is N-terminal L-arginyl-[protein] + L-leucyl-tRNA(Leu) = N-terminal L-leucyl-L-arginyl-[protein] + tRNA(Leu) + H(+). It catalyses the reaction L-phenylalanyl-tRNA(Phe) + an N-terminal L-alpha-aminoacyl-[protein] = an N-terminal L-phenylalanyl-L-alpha-aminoacyl-[protein] + tRNA(Phe). In terms of biological role, functions in the N-end rule pathway of protein degradation where it conjugates Leu, Phe and, less efficiently, Met from aminoacyl-tRNAs to the N-termini of proteins containing an N-terminal arginine or lysine. The polypeptide is Leucyl/phenylalanyl-tRNA--protein transferase (Paramagnetospirillum magneticum (strain ATCC 700264 / AMB-1) (Magnetospirillum magneticum)).